Consider the following 265-residue polypeptide: S-adenosylmethionine decarboxylase proenzyme (265 aa).

Serine 114 functions as the Schiff-base intermediate with substrate; via pyruvic acid in the catalytic mechanism. The residue at position 114 (serine 114) is a Pyruvic acid (Ser); by autocatalysis. The active-site Proton acceptor; for processing activity is histidine 119. Cysteine 142 serves as the catalytic Proton donor; for catalytic activity.

The protein belongs to the prokaryotic AdoMetDC family. Type 2 subfamily. In terms of assembly, heterooctamer of four alpha and four beta chains arranged as a tetramer of alpha/beta heterodimers. It depends on pyruvate as a cofactor. Post-translationally, is synthesized initially as an inactive proenzyme. Formation of the active enzyme involves a self-maturation process in which the active site pyruvoyl group is generated from an internal serine residue via an autocatalytic post-translational modification. Two non-identical subunits are generated from the proenzyme in this reaction, and the pyruvate is formed at the N-terminus of the alpha chain, which is derived from the carboxyl end of the proenzyme. The post-translation cleavage follows an unusual pathway, termed non-hydrolytic serinolysis, in which the side chain hydroxyl group of the serine supplies its oxygen atom to form the C-terminus of the beta chain, while the remainder of the serine residue undergoes an oxidative deamination to produce ammonia and the pyruvoyl group blocking the N-terminus of the alpha chain.

The catalysed reaction is S-adenosyl-L-methionine + H(+) = S-adenosyl 3-(methylsulfanyl)propylamine + CO2. It functions in the pathway amine and polyamine biosynthesis; S-adenosylmethioninamine biosynthesis; S-adenosylmethioninamine from S-adenosyl-L-methionine: step 1/1. Catalyzes the decarboxylation of S-adenosylmethionine to S-adenosylmethioninamine (dcAdoMet), the propylamine donor required for the synthesis of the polyamines spermine and spermidine from the diamine putrescine. The protein is S-adenosylmethionine decarboxylase proenzyme of Buchnera aphidicola subsp. Acyrthosiphon pisum (strain 5A).